The following is a 422-amino-acid chain: DNA-directed RNA polymerase III subunit RPC4 (422 aa).

Disordered stretches follow at residues 1–80 (MSSN…GQQR), 115–190 (KSEG…DDEE), 219–244 (IQEALSEKPTREPTPSVKTEPVGTGL), and 318–350 (RPAVKEEKEDMETQASDPSKKKKNIKKKDTKDA). Residues 25 to 29 (KPSLK) carry the Nuclear localization signal motif. Residues 28–37 (LKFKPKAVAR) are compositionally biased toward basic residues. The segment covering 38 to 64 (KSKEEREAAASKVKLEEESKRGNDKKH) has biased composition (basic and acidic residues). A phosphoserine mark is found at serine 137 and serine 138. Residues 138-148 (SENEAEDDDNE) show a composition bias toward acidic residues. Positions 160-170 (MGKEFEARNLI) are enriched in basic and acidic residues. Residues serine 178, serine 182, and serine 224 each carry the phosphoserine modification. The segment covering 219–229 (IQEALSEKPTR) has biased composition (basic and acidic residues). Threonine 228 and threonine 232 each carry phosphothreonine.

Belongs to the eukaryotic RPC4/POLR3D RNA polymerase subunit family. As to quaternary structure, component of the RNA polymerase III (Pol III) complex consisting of 17 subunits. Interacts with RPC37/RPC5. RPC53/RPC4, RPC37/RPC5 and RPC11/RPC10 probably form a Pol III subcomplex.

The protein resides in the nucleus. Its function is as follows. DNA-dependent RNA polymerase catalyzes the transcription of DNA into RNA using the four ribonucleoside triphosphates as substrates. Specific peripheric component of RNA polymerase III which synthesizes small RNAs, such as 5S rRNA and tRNAs. Essential for tRNA synthesis. The RPC53/RPC4-RPC37/RPC5 subcomplex is required for terminator recognition and reinitiation. This is DNA-directed RNA polymerase III subunit RPC4 (RPC53) from Saccharomyces cerevisiae (strain ATCC 204508 / S288c) (Baker's yeast).